We begin with the raw amino-acid sequence, 911 residues long: MFGSIAKALFGSSNDRYVKSLDKIVRQIAAFEPHVQALSDEELAAQTPKFRQMLAEGKTLDDILPEAFATVREASVRALGMRHFDVQMIGGIVLHRGEIAEMRTGEGKTLVATLAVYLNALEGKGVHVVTVNDYLARRDAETMGVLYNFLGLTVGVIVPNLNEEQRREAYNADITYATNNELGFDYLRDNMKHERGQMVHRPFNFAIVDEVDSILIDEARTPLIISGPTDDKSDLYISVDAVVKQIAPDLYEADEKTKNITLTEDGVEWVERAFEDAGLLVGSNLYDVENTMVVHHLDQALKANVMFKRDIDYIVKDGKIVIIDEFTGRMMDGRRWSNGLHQAVEAKEGVKIEPENQTMASITFQNYFRMYPKIAGMTGTAATEAPEFFDIYKMNVVSIPTNVPVQRIDEEDEFYKNTMDKFGAIAKLIRERYENGQPVLVGTVSIEKSELLSEFLQKEGVKHNVLNARFHEMEAHIVAQAGRLGAVTIATNMAGRGTDIQLGGNVEFRIEDELRDVPEGPEREAGIARIRAEVAEEKQKVLAAGGLCVIGTERHESRRIDNQLRGRSGRQGDPGMSKFYLCLEDDLLRIFGPDTLFARMMNSNLADGEAIGSKWLSKAIETAQKKVEARNYDIRKQVVEYDDVMNDQRKVIYEQRADIMDAEAVGDVVTDMRHDTVNAIVGDACPPGSYPEQWDVESLKARVRDVLGIEIPLDDWFQEEAIEPDTIEERIQQLADAHMDTKITEVDASAWRSLEKSILLERLDHHWKEHLATLDALRQVVFLRAYAQKTPINEYKQEAFGLFEKMLDAIREDVTRILMTSEIRLRPVEEFQLPELPDFLTSHIDPFTGENDAAPLAPAPSMFGALPPQAGGALSGGFPDGDPFAGQGISRNAPCPCGSGQKYKHCHGVAA.

Residues Gln-87, 105-109, and Asp-499 each bind ATP; that span reads GEGKT. 4 residues coordinate Zn(2+): Cys-895, Cys-897, Cys-906, and His-907.

Belongs to the SecA family. As to quaternary structure, monomer and homodimer. Part of the essential Sec protein translocation apparatus which comprises SecA, SecYEG and auxiliary proteins SecDF-YajC and YidC. Zn(2+) serves as cofactor.

Its subcellular location is the cell inner membrane. The protein resides in the cytoplasm. The catalysed reaction is ATP + H2O + cellular proteinSide 1 = ADP + phosphate + cellular proteinSide 2.. In terms of biological role, part of the Sec protein translocase complex. Interacts with the SecYEG preprotein conducting channel. Has a central role in coupling the hydrolysis of ATP to the transfer of proteins into and across the cell membrane, serving both as a receptor for the preprotein-SecB complex and as an ATP-driven molecular motor driving the stepwise translocation of polypeptide chains across the membrane. The sequence is that of Protein translocase subunit SecA from Novosphingobium aromaticivorans (strain ATCC 700278 / DSM 12444 / CCUG 56034 / CIP 105152 / NBRC 16084 / F199).